Here is a 149-residue protein sequence, read N- to C-terminus: Myosin light chain 1 (149 aa).

3 EF-hand domains span residues 2 to 37, 81 to 116, and 117 to 149; these read SATR…IGYN, AKTE…LGEK, and LTDA…VLRQ. Ca(2+) contacts are provided by Asp15, Asp94, Thr98, Lys100, and Asp105. Residue Lys116 forms a Glycyl lysine isopeptide (Lys-Gly) (interchain with G-Cter in ubiquitin) linkage. The Ca(2+) site is built by Asp123, Lys127, and Asp132.

Interacts with MYO1, MYO2 and IQG1 by binding to their IQ domains. Interacts with SEC4.

It is found in the bud neck. Its subcellular location is the bud tip. In terms of biological role, essential light chain for the class II conventional myosin MYO1. Also acts as light chain for the class V unconventional myosin MYO2 and for IQG1. Involved in the assembly of the contractile actomyosin ring at the bud neck during cytokinesis by recruiting IQG1 to the bud neck. Also required for chitin and MYO2-dependent secretory vesicle deposition to the center of the bud neck for septum formation. May stabilize MYO2 by binding to its IQ domains. Its major function is probably not to regulate MYO1 activity, but rather to coordinate actin ring formation and targeted membrane deposition during cytokinesis via its interactions with MYO1, IQG1 and MYO2. The sequence is that of Myosin light chain 1 (MLC1) from Saccharomyces cerevisiae (strain ATCC 204508 / S288c) (Baker's yeast).